A 241-amino-acid chain; its full sequence is Large ribosomal subunit protein eL32 (241 aa).

Residues 1 to 16 (MADNEEDVEAEEEYTE) are compositionally biased toward acidic residues. Disordered stretches follow at residues 1–47 (MADN…GADQ) and 68–182 (VGGL…HPSG). A compositionally biased stretch (basic and acidic residues) spans 29 to 44 (ESLREAGFESVEDVRG). The segment covering 73 to 96 (VESETEAEVEEEGGEEAPDEDVET) has biased composition (acidic residues). The segment covering 103 to 116 (LTEKTPDLSDEDAR) has biased composition (basic and acidic residues). A compositionally biased stretch (basic residues) spans 133 to 159 (DHHKKKRVSTSWRKPRGQLSKQRRGIK).

The protein belongs to the eukaryotic ribosomal protein eL32 family. As to quaternary structure, part of the 50S ribosomal subunit. Interacts weakly with protein L15.

Functionally, binds to the 23S rRNA. In Haloarcula marismortui (strain ATCC 43049 / DSM 3752 / JCM 8966 / VKM B-1809) (Halobacterium marismortui), this protein is Large ribosomal subunit protein eL32 (rpl32e).